Reading from the N-terminus, the 166-residue chain is Phospholipase A2 inhibitor A1 (166 aa).

The N-terminal stretch at 1–19 (MRLILLSGLLLLGIFLANG) is a signal peptide. The C-type lectin domain occupies 46–161 (LKGSFLIVHK…CDDNLLVVCE (116 aa)). 2 disulfides stabilise this stretch: C83–C160 and C138–C152. N122 carries an N-linked (GlcNAc...) asparagine glycan.

The protein belongs to the alpha-type phospholipase A2 inhibitor family. Homotrimer; non-covalently linked. In terms of tissue distribution, expressed by the liver.

It localises to the secreted. Functionally, this phospholipase A2 inhibitor binds directly phospholipase A2 in the presence or absence of calcium. The polypeptide is Phospholipase A2 inhibitor A1 (Bothrops neuwiedi (Neuwied's lancehead)).